The primary structure comprises 213 residues: 3-isopropylmalate dehydratase small subunit (213 aa).

Belongs to the LeuD family. LeuD type 1 subfamily. As to quaternary structure, heterodimer of LeuC and LeuD.

The catalysed reaction is (2R,3S)-3-isopropylmalate = (2S)-2-isopropylmalate. It participates in amino-acid biosynthesis; L-leucine biosynthesis; L-leucine from 3-methyl-2-oxobutanoate: step 2/4. Its function is as follows. Catalyzes the isomerization between 2-isopropylmalate and 3-isopropylmalate, via the formation of 2-isopropylmaleate. This chain is 3-isopropylmalate dehydratase small subunit, found in Neisseria meningitidis serogroup A / serotype 4A (strain DSM 15465 / Z2491).